The chain runs to 212 residues: Fibrillarin-like rRNA/tRNA 2'-O-methyltransferase (212 aa).

Residues 1-37 form a disordered region; that stretch reads MSEPNLPAGVERREIGGETRLATRGPPVYGEPTADGW. Residues 74 to 75, 90 to 91, 115 to 116, and 136 to 139 each bind S-adenosyl-L-methionine; these read TT, EF, DA, and DVAT.

It belongs to the methyltransferase superfamily. Fibrillarin family. As to quaternary structure, interacts with nop5. Component of box C/D small ribonucleoprotein (sRNP) particles that contain rpl7ae, FlpA and nop5, plus a guide RNA.

In terms of biological role, involved in pre-rRNA and tRNA processing. Utilizes the methyl donor S-adenosyl-L-methionine to catalyze the site-specific 2'-hydroxyl methylation of ribose moieties in rRNA and tRNA. Site specificity is provided by a guide RNA that base pairs with the substrate. Methylation occurs at a characteristic distance from the sequence involved in base pairing with the guide RNA. This chain is Fibrillarin-like rRNA/tRNA 2'-O-methyltransferase, found in Halorubrum lacusprofundi (strain ATCC 49239 / DSM 5036 / JCM 8891 / ACAM 34).